Reading from the N-terminus, the 558-residue chain is Putative cation/proton antiporter YbaL (558 aa).

The Periplasmic portion of the chain corresponds to 1–3; it reads MHH. Residues 4 to 24 traverse the membrane as a helical segment; it reads ATPLITTIVGGLVLAFILGML. Residues 25-31 lie on the Cytoplasmic side of the membrane; that stretch reads ANKLRIS. A helical transmembrane segment spans residues 32 to 52; sequence PLVGYLLAGVLAGPFTPGFVA. The Periplasmic segment spans residues 53-55; that stretch reads DTK. Residues 56–76 form a helical membrane-spanning segment; the sequence is LAPELAELGVILLMFGVGLHF. Topologically, residues 77–85 are cytoplasmic; the sequence is SLKDLMAVK. Residues 86-106 traverse the membrane as a helical segment; sequence AIAIPGAIAQIAVATLLGMAL. Topologically, residues 107-112 are periplasmic; sequence SAVLGW. A helical membrane pass occupies residues 113–133; that stretch reads SLMTGIVFGLCLSTASTVVLL. Topologically, residues 134-148 are cytoplasmic; the sequence is RALEERQLIDSQRGQ. Residues 149–169 traverse the membrane as a helical segment; the sequence is IAIGWLIVEDLVMVLTLVLLP. Residues 170 to 185 lie on the Periplasmic side of the membrane; that stretch reads AVAGMMEQGDVGFATL. A helical transmembrane segment spans residues 186-206; it reads AVDMGITIGKVIAFIAIMMLV. The Cytoplasmic segment spans residues 207–225; the sequence is GRRLVPWIMARSAATGSRE. Residues 226-246 form a helical membrane-spanning segment; it reads LFTLSVLALALGVAFGAVELF. A topological domain (periplasmic) is located at residue aspartate 247. Residues 248–268 traverse the membrane as a helical segment; that stretch reads VSFALGAFFAGMVLNESELSH. Topologically, residues 269-279 are cytoplasmic; that stretch reads RAAHDTLPLRD. The chain crosses the membrane as a helical span at residues 280-300; sequence AFAVLFFVSVGMLFDPLILIQ. Topologically, residues 301–303 are periplasmic; sequence QPL. The helical transmembrane segment at 304-324 threads the bilayer; that stretch reads AVLATLAIILFGKSLAAFFLV. The Cytoplasmic segment spans residues 325 to 336; that stretch reads RLFGHSQRTALT. A helical transmembrane segment spans residues 337-357; it reads IAASLAQIGEFAFILAGLGMA. Residues 358–367 lie on the Periplasmic side of the membrane; it reads LNLLPQAGQN. The chain crosses the membrane as a helical span at residues 368–388; that stretch reads LVLAGAILSIMLNPVLFALLE. The Cytoplasmic portion of the chain corresponds to 389–558; it reads KYLAKTETLE…TPPAGEVVTG (170 aa). Residues 417 to 534 form the RCK N-terminal domain; the sequence is CNHALLVGYG…TERGANQVVM (118 aa). AMP-binding positions include 427-428, 447-448, 467-468, glutamate 494, and arginine 514; these read RV, ET, and NA.

This sequence belongs to the monovalent cation:proton antiporter 2 (CPA2) transporter (TC 2.A.37) family.

The protein resides in the cell inner membrane. This Escherichia coli (strain K12) protein is Putative cation/proton antiporter YbaL (ybaL).